The chain runs to 592 residues: Aspartate--tRNA ligase (592 aa).

Residue Glu-171 coordinates L-aspartate. The tract at residues 195–198 (QLFK) is aspartate. Arg-217 contributes to the L-aspartate binding site. Residues 217–219 (RDE) and Gln-226 contribute to the ATP site. Position 448 (His-448) interacts with L-aspartate. Residue Glu-482 participates in ATP binding. Residue Arg-489 participates in L-aspartate binding. 534–537 (GLDR) contributes to the ATP binding site.

The protein belongs to the class-II aminoacyl-tRNA synthetase family. Type 1 subfamily. In terms of assembly, homodimer.

It localises to the cytoplasm. The enzyme catalyses tRNA(Asp) + L-aspartate + ATP = L-aspartyl-tRNA(Asp) + AMP + diphosphate. Catalyzes the attachment of L-aspartate to tRNA(Asp) in a two-step reaction: L-aspartate is first activated by ATP to form Asp-AMP and then transferred to the acceptor end of tRNA(Asp). This is Aspartate--tRNA ligase from Vibrio vulnificus (strain CMCP6).